The following is a 196-amino-acid chain: Recombination protein RecR (196 aa).

A C4-type zinc finger spans residues 55–70; it reads CELCGNLESESPCSIC. A Toprim domain is found at 78-173; the sequence is DIVCVVEEIT…KLSFLAHGIP (96 aa).

This sequence belongs to the RecR family.

Functionally, may play a role in DNA repair. It seems to be involved in an RecBC-independent recombinational process of DNA repair. It may act with RecF and RecO. This Neorickettsia sennetsu (strain ATCC VR-367 / Miyayama) (Ehrlichia sennetsu) protein is Recombination protein RecR.